Reading from the N-terminus, the 871-residue chain is Protein argonaute-2 (871 aa).

Residues 232–351 (PVIEFMCEVL…LPLEVCNIVA (120 aa)) form the PAZ domain. Interaction with guide RNA stretches follow at residues 314 to 319 (YFKDRH) and 536 to 578 (GKTP…LCLK). Residues 529–830 (LVVVILPGKT…VAFRARYHLV (302 aa)) enclose the Piwi domain. The tract at residues 599–602 (FQQP) is interaction with GW182 family members. Residue Asp-609 coordinates a divalent metal cation. Positions 662–672 (LIQFYKSTRFK) are interaction with GW182 family members. Asp-681 is an a divalent metal cation binding site. Interaction with guide RNA regions lie at residues 721–722 (KR), 765–773 (HAGIQGTSR), and 802–824 (YVRCTRSVSIPAPAYYAHLVAFR). Residue His-819 coordinates a divalent metal cation. Residues 834–856 (HDSAEGSHTSGQSNGRDQQALAK) form a disordered region. The span at 839–850 (GSHTSGQSNGRD) shows a compositional bias: polar residues.

It belongs to the argonaute family. Ago subfamily. Component of the RISC loading complex (RLC), or micro-RNA (miRNA) loading complex (miRLC), which is composed of dicer1, ago2 and tarbp2. Note that the trimeric RLC/miRLC is also referred to as RISC. It depends on Mg(2+) as a cofactor. Requires Mn(2+) as cofactor.

It is found in the cytoplasm. Its subcellular location is the P-body. It catalyses the reaction Endonucleolytic cleavage to 5'-phosphomonoester.. Functionally, required for RNA-mediated gene silencing (RNAi) by the RNA-induced silencing complex (RISC). The 'minimal RISC' appears to include ago2 bound to a short guide RNA such as a microRNA (miRNA) or short interfering RNA (siRNA). These guide RNAs direct RISC to complementary mRNAs that are targets for RISC-mediated gene silencing. The precise mechanism of gene silencing depends on the degree of complementarity between the miRNA or siRNA and its target. Binding of RISC to a perfectly complementary mRNA generally results in silencing due to endonucleolytic cleavage of the mRNA specifically by ago2. Binding of RISC to a partially complementary mRNA results in silencing through inhibition of translation, and this is independent of endonuclease activity. The inhibition of translational initiation leads to the accumulation of the affected mRNA in cytoplasmic processing bodies (P-bodies), where mRNA degradation may subsequently occur. The polypeptide is Protein argonaute-2 (ago2) (Xenopus tropicalis (Western clawed frog)).